Here is a 371-residue protein sequence, read N- to C-terminus: Geranylgeranyl pyrophosphate synthase paxG (371 aa).

Isopentenyl diphosphate-binding residues include Lys89, Arg92, and His121. Mg(2+) contacts are provided by Asp128 and Asp132. Arg137 contributes to the dimethylallyl diphosphate binding site. Isopentenyl diphosphate is bound at residue Arg138. Residues Lys215, Thr216, and Gln249 each coordinate dimethylallyl diphosphate. Residue Asp252 participates in Mg(2+) binding. Dimethylallyl diphosphate-binding residues include Asn256, Lys266, and Lys276. The Peroxisomal targeting signal motif lies at 369–371 (GRV).

This sequence belongs to the FPP/GGPP synthase family. Mg(2+) serves as cofactor.

It is found in the peroxisome. The enzyme catalyses isopentenyl diphosphate + dimethylallyl diphosphate = (2E)-geranyl diphosphate + diphosphate. It catalyses the reaction isopentenyl diphosphate + (2E)-geranyl diphosphate = (2E,6E)-farnesyl diphosphate + diphosphate. The catalysed reaction is isopentenyl diphosphate + (2E,6E)-farnesyl diphosphate = (2E,6E,10E)-geranylgeranyl diphosphate + diphosphate. It participates in secondary metabolite biosynthesis. Geranylgeranyl pyrophosphate synthase; part of the gene cluster that mediates the biosynthesis of paxilline, a mycotoxin that acts as an inhibitor of mammalian maxi-K channels. PaxG, the geranylgeranyl diphosphate (GGPP) synthase is proposed to catalyze the first step in paxilline biosynthesis. Condensation of indole-3-glycerol phosphate with GGPP by paxC then forms 3-geranylgeranylindole (3-GGI), followed by epoxidation and cyclization of this intermediate (by paxM and paxB) to form paspaline. Paspaline is subsequently converted to 13-desoxypaxilline by paxP, the latter being then converted to paxilline by paxQ. Finally paxilline can be mono- and di-prenylated by paxD. This is Geranylgeranyl pyrophosphate synthase paxG from Penicillium paxilli.